The following is a 258-amino-acid chain: Acyl-[acyl-carrier-protein]--UDP-N-acetylglucosamine O-acyltransferase (258 aa).

It belongs to the transferase hexapeptide repeat family. LpxA subfamily. As to quaternary structure, homotrimer.

It localises to the cytoplasm. The catalysed reaction is a (3R)-hydroxyacyl-[ACP] + UDP-N-acetyl-alpha-D-glucosamine = a UDP-3-O-[(3R)-3-hydroxyacyl]-N-acetyl-alpha-D-glucosamine + holo-[ACP]. Its pathway is glycolipid biosynthesis; lipid IV(A) biosynthesis; lipid IV(A) from (3R)-3-hydroxytetradecanoyl-[acyl-carrier-protein] and UDP-N-acetyl-alpha-D-glucosamine: step 1/6. Its function is as follows. Involved in the biosynthesis of lipid A, a phosphorylated glycolipid that anchors the lipopolysaccharide to the outer membrane of the cell. This is Acyl-[acyl-carrier-protein]--UDP-N-acetylglucosamine O-acyltransferase from Saccharophagus degradans (strain 2-40 / ATCC 43961 / DSM 17024).